We begin with the raw amino-acid sequence, 345 residues long: Dihydroorotase (345 aa).

H14 and H16 together coordinate Zn(2+). Substrate-binding positions include 16–18 (HLR) and N42. Zn(2+) contacts are provided by K100, H137, and H175. Residue K100 is modified to N6-carboxylysine. H137 contacts substrate. L220 contributes to the substrate binding site. D248 contacts Zn(2+). The active site involves D248. Residues H252 and A264 each coordinate substrate.

It belongs to the metallo-dependent hydrolases superfamily. DHOase family. Class II DHOase subfamily. Homodimer. Requires Zn(2+) as cofactor.

The catalysed reaction is (S)-dihydroorotate + H2O = N-carbamoyl-L-aspartate + H(+). Its pathway is pyrimidine metabolism; UMP biosynthesis via de novo pathway; (S)-dihydroorotate from bicarbonate: step 3/3. Catalyzes the reversible cyclization of carbamoyl aspartate to dihydroorotate. The sequence is that of Dihydroorotase from Methylobacillus flagellatus (strain ATCC 51484 / DSM 6875 / VKM B-1610 / KT).